The following is a 359-amino-acid chain: MKTAAARGATRRDGQPKLGLCVLCGLPAAGKSTFARALALRLRRERGWAVGVLSYDDVLPLALPDCDGTQPRPSQWKMFRQELLKHLECFLVAVISGAQMSAPPNRTEAVWEDFITCLKSQDLMIFPTALEAQPCHLLAKPAVSRPLFLVLDDNFYYQSMRYEVYQLARKYSLGFCQLFLDCPLETCLKRNGERSQPLPDETIQLMGRKIEKPNPEKNAWEHNSLIIQSSACSLEASLEVTGLLLTALENPIKCVEDNTEQKETDRIICSTNILHKADETLRRTVSQTMREAKDEQIPLNNLKHLAEELNKLKADVLEDLRQGNRKYLCFQQTTDLSDIISSFCKERDTIVQKYFSKQH.

25–32 serves as a coordination point for ATP; sequence GLPAAGKS.

Belongs to the L-seryl-tRNA(Sec) kinase family. It depends on Mg(2+) as a cofactor.

The enzyme catalyses L-seryl-tRNA(Sec) + ATP = O-phospho-L-seryl-tRNA(Sec) + ADP. It functions in the pathway aminoacyl-tRNA biosynthesis; selenocysteinyl-tRNA(Sec) biosynthesis; selenocysteinyl-tRNA(Sec) from L-seryl-tRNA(Sec) (archaeal/eukaryal route): step 1/2. In terms of biological role, specifically phosphorylates seryl-tRNA(Sec) to O-phosphoseryl-tRNA(Sec), an activated intermediate for selenocysteine biosynthesis. No activity with other tRNAs has been detected. The protein is L-seryl-tRNA(Sec) kinase (Pstk) of Mus musculus (Mouse).